A 78-amino-acid chain; its full sequence is Large ribosomal subunit protein bL28 (78 aa).

The protein belongs to the bacterial ribosomal protein bL28 family.

The polypeptide is Large ribosomal subunit protein bL28 (Salmonella choleraesuis (strain SC-B67)).